Here is a 560-residue protein sequence, read N- to C-terminus: Dihydroxy-acid dehydratase (560 aa).

Residue Asp-78 participates in Mg(2+) binding. Cys-119 serves as a coordination point for [2Fe-2S] cluster. Residues Asp-120 and Lys-121 each contribute to the Mg(2+) site. Residue Lys-121 is modified to N6-carboxylysine. Cys-192 provides a ligand contact to [2Fe-2S] cluster. Glu-446 provides a ligand contact to Mg(2+). Residue Ser-472 is the Proton acceptor of the active site.

It belongs to the IlvD/Edd family. In terms of assembly, homodimer. [2Fe-2S] cluster serves as cofactor. Requires Mg(2+) as cofactor.

It catalyses the reaction (2R)-2,3-dihydroxy-3-methylbutanoate = 3-methyl-2-oxobutanoate + H2O. The enzyme catalyses (2R,3R)-2,3-dihydroxy-3-methylpentanoate = (S)-3-methyl-2-oxopentanoate + H2O. It functions in the pathway amino-acid biosynthesis; L-isoleucine biosynthesis; L-isoleucine from 2-oxobutanoate: step 3/4. It participates in amino-acid biosynthesis; L-valine biosynthesis; L-valine from pyruvate: step 3/4. Its function is as follows. Functions in the biosynthesis of branched-chain amino acids. Catalyzes the dehydration of (2R,3R)-2,3-dihydroxy-3-methylpentanoate (2,3-dihydroxy-3-methylvalerate) into 2-oxo-3-methylpentanoate (2-oxo-3-methylvalerate) and of (2R)-2,3-dihydroxy-3-methylbutanoate (2,3-dihydroxyisovalerate) into 2-oxo-3-methylbutanoate (2-oxoisovalerate), the penultimate precursor to L-isoleucine and L-valine, respectively. This chain is Dihydroxy-acid dehydratase, found in Anaeromyxobacter sp. (strain K).